A 114-amino-acid polypeptide reads, in one-letter code: Seed trypsin/chymotrypsin inhibitor TI5-72 (114 aa).

A signal peptide spans 1-28 (MELMNKKVMMKLALMVFLLSFAANVVNA). The propeptide occupies 29–42 (RFDSTSFITQVLSN). 7 cysteine pairs are disulfide-bonded: cysteine 50-cysteine 103, cysteine 51-cysteine 66, cysteine 54-cysteine 99, cysteine 56-cysteine 64, cysteine 73-cysteine 80, cysteine 77-cysteine 92, and cysteine 82-cysteine 90.

It belongs to the Bowman-Birk serine protease inhibitor family. In terms of tissue distribution, seed.

In terms of biological role, inhibitor of trypsin and of chymotrypsin. May function as a natural phytochemical defense against predators. The sequence is that of Seed trypsin/chymotrypsin inhibitor TI5-72 (TI572) from Pisum sativum (Garden pea).